A 940-amino-acid chain; its full sequence is Isoleucine--tRNA ligase (940 aa).

The 'HIGH' region signature appears at 58-68; it reads PYANGSIHIGH. E564 lines the L-isoleucyl-5'-AMP pocket. The 'KMSKS' region signature appears at 605–609; the sequence is KMSKS. Residue K608 participates in ATP binding. Residues C903, C906, C923, and C926 each contribute to the Zn(2+) site.

Belongs to the class-I aminoacyl-tRNA synthetase family. IleS type 1 subfamily. In terms of assembly, monomer. The cofactor is Zn(2+).

It localises to the cytoplasm. The enzyme catalyses tRNA(Ile) + L-isoleucine + ATP = L-isoleucyl-tRNA(Ile) + AMP + diphosphate. Its function is as follows. Catalyzes the attachment of isoleucine to tRNA(Ile). As IleRS can inadvertently accommodate and process structurally similar amino acids such as valine, to avoid such errors it has two additional distinct tRNA(Ile)-dependent editing activities. One activity is designated as 'pretransfer' editing and involves the hydrolysis of activated Val-AMP. The other activity is designated 'posttransfer' editing and involves deacylation of mischarged Val-tRNA(Ile). This is Isoleucine--tRNA ligase from Shewanella baltica (strain OS223).